A 152-amino-acid polypeptide reads, in one-letter code: UPF0735 ACT domain-containing protein CTC_00116 (152 aa).

The ACT domain occupies 76–151 (IISVTLNHRP…NVIKLDLIAM (76 aa)).

This sequence belongs to the UPF0735 family.

The protein is UPF0735 ACT domain-containing protein CTC_00116 of Clostridium tetani (strain Massachusetts / E88).